Reading from the N-terminus, the 444-residue chain is Elongation factor 1-alpha (444 aa).

One can recognise a tr-type G domain in the interval Lys-15–Val-238. Positions Gly-24–Ser-31 are G1. Gly-24–Ser-31 is a binding site for GTP. A Mg(2+)-binding site is contributed by Ser-31. Positions Gly-80–Glu-84 are G2. A G3 region spans residues Asp-101–Gly-104. GTP contacts are provided by residues Asp-101–His-105 and Asn-163–Asp-166. The G4 stretch occupies residues Asn-163 to Asp-166. The interval Ser-202 to Ile-204 is G5.

It belongs to the TRAFAC class translation factor GTPase superfamily. Classic translation factor GTPase family. EF-Tu/EF-1A subfamily.

It localises to the cytoplasm. The catalysed reaction is GTP + H2O = GDP + phosphate + H(+). In terms of biological role, GTP hydrolase that promotes the GTP-dependent binding of aminoacyl-tRNA to the A-site of ribosomes during protein biosynthesis. In Pyrobaculum aerophilum (strain ATCC 51768 / DSM 7523 / JCM 9630 / CIP 104966 / NBRC 100827 / IM2), this protein is Elongation factor 1-alpha.